A 413-amino-acid chain; its full sequence is Zeaxanthin glucosyltransferase (413 aa).

This sequence belongs to the UDP-glycosyltransferase family.

It catalyses the reaction all-trans-zeaxanthin + 2 UDP-alpha-D-glucose = zeaxanthin bis(beta-D-glucoside) + 2 UDP + 2 H(+). The protein operates within carotenoid biosynthesis; zeaxanthin diglucoside biosynthesis. Its function is as follows. Catalyzes the glycosylation reaction which converts zeaxanthin to zeaxanthin bis(beta-D-glucoside). The reaction proceeds in two steps with the monoglucoside as an intermediate. This chain is Zeaxanthin glucosyltransferase (crtX), found in Pseudescherichia vulneris (Escherichia vulneris).